The following is a 154-amino-acid chain: MKKILLLNGPNLNMLGKREPHIYGSQTLSDIEQHLQQSAQAQGYELDYFQANGEESLINRIHQAFQNTDFIIINPGAFTHTSVAIRDALLAVSIPFIEVHLSNVHAREPFRHHSYLSDVAKGVICGLGAKGYDYALDFAISELQKIQLGEMMNG.

Tyrosine 23 serves as the catalytic Proton acceptor. Substrate-binding residues include asparagine 74, histidine 80, and aspartate 87. The active-site Proton donor is histidine 100. Substrate contacts are provided by residues 101–102 (LS) and arginine 111.

This sequence belongs to the type-II 3-dehydroquinase family. In terms of assembly, homododecamer.

The enzyme catalyses 3-dehydroquinate = 3-dehydroshikimate + H2O. It participates in metabolic intermediate biosynthesis; chorismate biosynthesis; chorismate from D-erythrose 4-phosphate and phosphoenolpyruvate: step 3/7. In terms of biological role, catalyzes a trans-dehydration via an enolate intermediate. This Actinobacillus pleuropneumoniae serotype 5b (strain L20) protein is 3-dehydroquinate dehydratase.